A 383-amino-acid polypeptide reads, in one-letter code: tRNA-specific 2-thiouridylase MnmA (383 aa).

Residues 30-37 (GLSGGVDS) and Leu56 each bind ATP. Residue Cys117 is the Nucleophile of the active site. Cys117 and Cys216 are disulfide-bonded. An ATP-binding site is contributed by Gly142. The interaction with tRNA stretch occupies residues 166-168 (KDQ). The active-site Cysteine persulfide intermediate is the Cys216. The interval 321–322 (RY) is interaction with tRNA.

This sequence belongs to the MnmA/TRMU family.

Its subcellular location is the cytoplasm. It catalyses the reaction S-sulfanyl-L-cysteinyl-[protein] + uridine(34) in tRNA + AH2 + ATP = 2-thiouridine(34) in tRNA + L-cysteinyl-[protein] + A + AMP + diphosphate + H(+). Functionally, catalyzes the 2-thiolation of uridine at the wobble position (U34) of tRNA, leading to the formation of s(2)U34. This is tRNA-specific 2-thiouridylase MnmA from Synechococcus sp. (strain CC9605).